The chain runs to 388 residues: MAFQLTPLRVALVAGEPSGDLLGASLLGGLHARLPASSRYYGIGGPRMSAVEFDAHWPMEKLAVRGYVEALKHIPEILRIRGELKRQLFAEPPDAFVGIDAPDFNFGLEQALRGAGIPTIHFVCPSIWAWRGGRIKKIVKAVDHMLCLFPFEPELLEKAGVAATFVGHPLADEIPLEPDTHGARIALGLPGGGPVIAVLPGSRRSEIELIGPTFFDAMELMQQREPGVRFVVPAATPALRALLQPLVDAHPSLSVTLTEGRAQVAMTAADAILVKSGTVTLEAALLKKPMVISYKVPWLTGQIMRRQGYLPYVGLPNILAGRFVVPELLQHFATPDALADATLTQLRDDANRRALADIFTDMHLALRQNTAQRAAEAVAHVIDSRKPR.

The protein belongs to the LpxB family.

The enzyme catalyses a lipid X + a UDP-2-N,3-O-bis[(3R)-3-hydroxyacyl]-alpha-D-glucosamine = a lipid A disaccharide + UDP + H(+). The protein operates within bacterial outer membrane biogenesis; LPS lipid A biosynthesis. Condensation of UDP-2,3-diacylglucosamine and 2,3-diacylglucosamine-1-phosphate to form lipid A disaccharide, a precursor of lipid A, a phosphorylated glycolipid that anchors the lipopolysaccharide to the outer membrane of the cell. In Burkholderia mallei (strain NCTC 10247), this protein is Lipid-A-disaccharide synthase.